The primary structure comprises 547 residues: MKFETTKNKLHGNAYYQAQFQDPIKFTTGSATPASYNQFIDALRERLTGGLIYGIPVLRDPSTVEKPNQYVTVELSYSDTVSIQLGIDLTNAYVVAYRAGSESFFFRNAPASASTYLFTGTQQYSLPFDGNYDDLEKWAHQSRQRISLGLEALRQGIKFLRSGASDDEEIARTLIVIIQMVAEAARFRYVSKLVVISLSNRAAFQPDPSMLSLENTWEPLSRAVQHTVQDTFPQNVTLINVRQERVVVSSLSHPSVSALALMLFVCNPLNATQSPLLIRSVVEQSKICSSHYEPTVRIGGRDGLCVDVSDNAYNNGNPIILWKCKDQLEVNQLWTLKSDKTIRSKGKCLTTYGYAPGNYVMIYDCSSAVAEATYWDIWDNGTIINPKSGLVLSAESSSMGGTLTVQKNDYRMRQGWRTGNDTSPFVTSIAGFFKLCMEAHGNSMWLDVCDITKEEQQWAVYPDGSIRPVQNTNNCLTCEEHKQGATIVMMGCSNAWASQRWVFKSDGTIYNLYDDMVMDVKSSDPSLKQIILWPYTGNANQMWATLF.

The first 20 residues, 1–20 (MKFETTKNKLHGNAYYQAQF), serve as a signal peptide directing secretion. At Gln21 the chain carries Pyrrolidone carboxylic acid. Residue Glu183 is part of the active site. Intrachain disulfides connect Cys266–Cys288, Cys305–Cys324, and Cys348–Cys365. Residues 279–280 (RS) constitute a propeptide, linker peptide. Residues 292-419 (YEPTVRIGGR…YRMRQGWRTG (128 aa)) enclose the Ricin B-type lectin 1 domain. A 1-alpha repeat occupies 302-344 (DGLCVDVSDNAYNNGNPIILWKCKDQLEVNQLWTLKSDKTIRS). The 1-beta repeat unit spans residues 345-385 (KGKCLTTYGYAPGNYVMIYDCSSAVAEATYWDIWDNGTIIN). Residues Asn380 and Asn420 are each glycosylated (N-linked (GlcNAc...) asparagine). Residues 388-420 (SGLVLSAESSSMGGTLTVQKNDYRMRQGWRTGN) form a 1-gamma repeat. The Ricin B-type lectin 2 domain occupies 422-546 (TSPFVTSIAG…GNANQMWATL (125 aa)). The stretch at 433–468 (FKLCMEAHGNSMWLDVCDITKEEQQWAVYPDGSIRP) is one 2-alpha repeat. Intrachain disulfides connect Cys436–Cys449 and Cys475–Cys492. The 2-beta repeat unit spans residues 472 to 511 (TNNCLTCEEHKQGATIVMMGCSNAWASQRWVFKSDGTIYN). The stretch at 514–547 (DDMVMDVKSSDPSLKQIILWPYTGNANQMWATLF) is one 2-gamma repeat.

It in the N-terminal section; belongs to the ribosome-inactivating protein family. Type 2 RIP subfamily. In terms of assembly, heterotetramer of two A and two B chains.

The catalysed reaction is Endohydrolysis of the N-glycosidic bond at one specific adenosine on the 28S rRNA.. The A chain is responsible for inhibiting protein synthesis through the catalytic inactivation of 60S ribosomal subunits by removing adenine from position 4,324 of 28S rRNA. Less toxic than abrin-a. Functionally, the B chain is a galactose-specific lectin that facilitates the binding to the cell membrane that precedes endocytosis. The polypeptide is Agglutinin-1 (Abrus precatorius (Indian licorice)).